We begin with the raw amino-acid sequence, 944 residues long: Protocadherin gamma-C5 (944 aa).

Residues 1–29 (MGPKTLPQLAGKWQVLCMLSLCCWGWVSG) form the signal peptide. Cadherin domains are found at residues 30–133 (QLRY…SPSF), 134–242 (ATPE…APTF), 243–350 (QSSV…APEV), 351–454 (LLAS…APRF), 455–564 (NQQL…APAV), and 571–677 (WEHS…MPKS). Residues 30–693 (QLRYSVVEES…PPERSDLTLY (664 aa)) lie on the Extracellular side of the membrane. 3 N-linked (GlcNAc...) asparagine glycosylation sites follow: Asn265, Asn443, and Asn547. Residues 694 to 714 (LIVALATVSLLSLVTFTFLSA) form a helical membrane-spanning segment. Topologically, residues 715 to 944 (KCLQGNADGD…KKKSGKKEKK (230 aa)) are cytoplasmic. 3 disordered regions span residues 722-747 (DGDGGGGQCCRRQDSPSPDFYKQSSP), 812-853 (SNTL…WPNN), and 914-944 (ATLTNAAGKRDGKAPAGGNGNKKKSGKKEKK). Over residues 820–853 (QQAPPNTDWRFSQAQRPGTSGSQNGDDTGTWPNN) the composition is skewed to polar residues. The span at 934–944 (NKKKSGKKEKK) shows a compositional bias: basic residues.

It localises to the cell membrane. Potential calcium-dependent cell-adhesion protein. May be involved in the establishment and maintenance of specific neuronal connections in the brain. The protein is Protocadherin gamma-C5 (PCDHGC5) of Homo sapiens (Human).